A 225-amino-acid polypeptide reads, in one-letter code: RNA-binding protein 24-A (225 aa).

Residues 11 to 88 (TKIFVGGLPY…RKANVNLAYL (78 aa)) form the RRM domain.

The protein localises to the nucleus. It localises to the cytoplasm. Its function is as follows. Multifunctional RNA-binding protein involved in the regulation of pre-mRNA splicing, mRNA stability and mRNA translation important for cell fate decision and differentiation. Plays a major role in pre-mRNA alternative splicing regulation. Mediates preferentially muscle-specific exon inclusion in numerous mRNAs important for striated cardiac and skeletal muscle cell differentiation. Binds to intronic splicing enhancer (ISE) composed of stretches of GU-rich motifs localized in flanking intron of exon that will be included by alternative splicing. Involved in embryonic stem cell (ESC) transition to cardiac cell differentiation by promoting pre-mRNA alternative splicing events of several pluripotency and/or differentiation genes. Plays a role in the regulation of mRNA stability and mRNA translation to which it is bound. Involved in myogenic differentiation by regulating myog levels. Binds to a huge amount of mRNAs. Required for embryonic heart development, sarcomer and M-band formation in striated muscles. The polypeptide is RNA-binding protein 24-A (rbm24-a) (Xenopus laevis (African clawed frog)).